The sequence spans 426 residues: Metacaspase-1B (426 aa).

Residues 1 to 14 are compositionally biased toward gly residues; sequence MSGYPGAGYNGGGY. The tract at residues 1-111 is disordered; it reads MSGYPGAGYN…QAPPPPPQAP (111 aa). A compositionally biased stretch (low complexity) spans 21–68; that stretch reads QYGGYYPPQPAYNAYQQPPPQQQQYMVYHQPSPGPQQHQHWNPQQQTP. Active-site residues include H217 and C273.

This sequence belongs to the peptidase C14B family.

Its function is as follows. Involved in cell death (apoptosis). This is Metacaspase-1B (casB) from Neurospora crassa (strain ATCC 24698 / 74-OR23-1A / CBS 708.71 / DSM 1257 / FGSC 987).